Reading from the N-terminus, the 176-residue chain is Pituitary adenylate cyclase-activating polypeptide (176 aa).

Positions 1–24 are cleaved as a signal peptide; the sequence is MTMCSGARLALLVYGIIMHSSVYS. Residues 25–79 constitute a propeptide that is removed on maturation; the sequence is SPAAAGLRFPGIRPEEEAYGEDGNPLPDFDGSEPPGAGSPASAPRAAAAWYRPAG. Residues 39 to 68 form a disordered region; the sequence is EEEAYGEDGNPLPDFDGSEPPGAGSPASAP. A compositionally biased stretch (low complexity) spans 56-68; it reads SEPPGAGSPASAP. The tract at residues 150-158 is important for receptor binding; that stretch reads VKKYLAAVL. Leu-158 bears the Leucine amide mark. Residue Lys-169 is modified to Lysine amide. The propeptide occupies 173 to 176; the sequence is IAYL.

The protein belongs to the glucagon family.

It localises to the secreted. Functionally, PACAP is a neuropeptide involved in diverse array of physiological processes through activating the PACAP subfamily of class B1 G protein-coupled receptors: VIP receptor 1 (VIPR1), VIP receptor 2 (VIPR2), and PACAP type I receptor (ADCYAP1R1). Exerts neuroprotective and general cytoprotective effects due to anti-apoptotic, anti-inflammatory, and antioxidant actions. Promotes neuron projection development through the RAPGEF2/Rap1/B-Raf/ERK pathway. In chromaffin cells, induces long-lasting increase of intracellular calcium concentrations and neuroendocrine secretion. Involved in the control of glucose homeostasis, induces insulin secretion by pancreatic beta cells. PACAP exists in two bioactive forms from proteolysis of the same precursor protein, PACAP27 and PACAP38, which differ by eleven amino acid residues in the C-terminus. In Homo sapiens (Human), this protein is Pituitary adenylate cyclase-activating polypeptide.